Reading from the N-terminus, the 353-residue chain is Polyadenylate-binding protein-interacting protein 10 (353 aa).

The interval 1–61 is disordered; sequence MAVAENAGVK…IDSTPETDDR (61 aa). The segment covering 20-31 has biased composition (low complexity); that stretch reads NNNTAASATETT. The PAM2-like signature appears at 96-106; that stretch reads KLNPMAQEFVP. Residues 128 to 159 form a disordered region; sequence AAPPKLADGNDHFPRRRRSFGQGKRRMNKRTS. The segment covering 141-156 has biased composition (basic residues); sequence PRRRRSFGQGKRRMNK. A Bipartite nuclear localization signal motif is present at residues 142 to 153; sequence RRRRSFGQGKRR. RRM domains lie at 169–244 and 266–341; these read RTVY…PSKT.

In terms of tissue distribution, expressed in cauline leaves, stems, rosette leaves, immature siliques and primary inflorescences.

Its subcellular location is the nucleus. This chain is Polyadenylate-binding protein-interacting protein 10 (CID10), found in Arabidopsis thaliana (Mouse-ear cress).